A 440-amino-acid chain; its full sequence is Endoglucanase B (440 aa).

Residues 1 to 33 (MNKRLSRGKISLLASVFVTTTFMGGVNVLASTA) form the signal peptide. The Proton donor role is filled by glutamate 179. Catalysis depends on glutamate 305, which acts as the Nucleophile. Residues 381–440 (TSYSLGDVNKDGKVNAIDYAVLKSILLGTNTNVDLSVSDMNKDGKVNALDLAVLKKMLLS) form the Dockerin domain.

The protein belongs to the glycosyl hydrolase 5 (cellulase A) family.

The enzyme catalyses Endohydrolysis of (1-&gt;4)-beta-D-glucosidic linkages in cellulose, lichenin and cereal beta-D-glucans.. It carries out the reaction Endohydrolysis of (1-&gt;4)-beta-D-xylosidic linkages in xylans.. Functionally, has endoglucanase activity on carboxymethyl-cellulose (CMC), xylan and lichenan, but not Avicel. This chain is Endoglucanase B (engB), found in Clostridium cellulovorans (strain ATCC 35296 / DSM 3052 / OCM 3 / 743B).